A 522-amino-acid chain; its full sequence is Type-2 serine--tRNA ligase (522 aa).

Alanine 319 serves as a coordination point for L-serine. Zn(2+) is bound at residue cysteine 321. Arginine 350 contacts L-serine. ATP is bound by residues 350 to 352 and 361 to 362; these read RWE and RV. Position 367 to 369 (367 to 369) interacts with L-serine; sequence RIE. Residues glutamate 369 and cysteine 476 each coordinate Zn(2+). Arginine 483 serves as a coordination point for ATP.

It belongs to the class-II aminoacyl-tRNA synthetase family. Type-2 seryl-tRNA synthetase subfamily. In terms of assembly, homodimer. It depends on Zn(2+) as a cofactor.

The protein localises to the cytoplasm. It catalyses the reaction tRNA(Ser) + L-serine + ATP = L-seryl-tRNA(Ser) + AMP + diphosphate + H(+). It carries out the reaction tRNA(Sec) + L-serine + ATP = L-seryl-tRNA(Sec) + AMP + diphosphate + H(+). It participates in aminoacyl-tRNA biosynthesis; selenocysteinyl-tRNA(Sec) biosynthesis; L-seryl-tRNA(Sec) from L-serine and tRNA(Sec): step 1/1. Its function is as follows. Catalyzes the attachment of serine to tRNA(Ser). Is also able to aminoacylate tRNA(Sec) with serine, to form the misacylated tRNA L-seryl-tRNA(Sec), which will be further converted into selenocysteinyl-tRNA(Sec). The chain is Type-2 serine--tRNA ligase (serS) from Methanococcus aeolicus (strain ATCC BAA-1280 / DSM 17508 / OCM 812 / Nankai-3).